Consider the following 127-residue polypeptide: Small ribosomal subunit protein uS12 (127 aa).

Position 89 is a 3-methylthioaspartic acid (Asp89).

This sequence belongs to the universal ribosomal protein uS12 family. In terms of assembly, part of the 30S ribosomal subunit. Contacts proteins S8 and S17. May interact with IF1 in the 30S initiation complex.

With S4 and S5 plays an important role in translational accuracy. Its function is as follows. Interacts with and stabilizes bases of the 16S rRNA that are involved in tRNA selection in the A site and with the mRNA backbone. Located at the interface of the 30S and 50S subunits, it traverses the body of the 30S subunit contacting proteins on the other side and probably holding the rRNA structure together. The combined cluster of proteins S8, S12 and S17 appears to hold together the shoulder and platform of the 30S subunit. In Campylobacter fetus subsp. fetus (strain 82-40), this protein is Small ribosomal subunit protein uS12.